We begin with the raw amino-acid sequence, 350 residues long: Biotin synthase (350 aa).

In terms of domain architecture, Radical SAM core spans 41–268 (NEVQVSRLLS…KSRVRLSAGR (228 aa)). [4Fe-4S] cluster contacts are provided by Cys-56, Cys-60, and Cys-63. [2Fe-2S] cluster-binding residues include Cys-100, Cys-131, Cys-191, and Arg-263.

It belongs to the radical SAM superfamily. Biotin synthase family. As to quaternary structure, homodimer. [4Fe-4S] cluster serves as cofactor. Requires [2Fe-2S] cluster as cofactor.

The catalysed reaction is (4R,5S)-dethiobiotin + (sulfur carrier)-SH + 2 reduced [2Fe-2S]-[ferredoxin] + 2 S-adenosyl-L-methionine = (sulfur carrier)-H + biotin + 2 5'-deoxyadenosine + 2 L-methionine + 2 oxidized [2Fe-2S]-[ferredoxin]. The protein operates within cofactor biosynthesis; biotin biosynthesis; biotin from 7,8-diaminononanoate: step 2/2. Functionally, catalyzes the conversion of dethiobiotin (DTB) to biotin by the insertion of a sulfur atom into dethiobiotin via a radical-based mechanism. The protein is Biotin synthase of Shewanella pealeana (strain ATCC 700345 / ANG-SQ1).